The primary structure comprises 257 residues: Ribonuclease PH (257 aa).

Phosphate-binding positions include R88 and 126-128 (GTR).

The protein belongs to the RNase PH family. As to quaternary structure, homohexameric ring arranged as a trimer of dimers.

The catalysed reaction is tRNA(n+1) + phosphate = tRNA(n) + a ribonucleoside 5'-diphosphate. Its function is as follows. Phosphorolytic 3'-5' exoribonuclease that plays an important role in tRNA 3'-end maturation. Removes nucleotide residues following the 3'-CCA terminus of tRNAs; can also add nucleotides to the ends of RNA molecules by using nucleoside diphosphates as substrates, but this may not be physiologically important. Probably plays a role in initiation of 16S rRNA degradation (leading to ribosome degradation) during starvation. The chain is Ribonuclease PH from Nocardia farcinica (strain IFM 10152).